The primary structure comprises 540 residues: CUB domain-containing protein 2 (540 aa).

Positions 1–24 are cleaved as a signal peptide; sequence MLAELGACLLLAMVLLDSDPGTQA. Residues 25–516 are Extracellular-facing; that stretch reads MEGVKCGGVL…GTMVTQDTSD (492 aa). 6 disulfides stabilise this stretch: Cys-30–Cys-56, Cys-83–Cys-106, Cys-145–Cys-171, Cys-198–Cys-218, Cys-257–Cys-283, and Cys-314–Cys-336. 3 consecutive CUB domains span residues 30–143, 145–255, and 257–373; these read CGGV…YQKD, CGGV…YFSG, and CQEV…YIGV. An N-linked (GlcNAc...) asparagine glycan is attached at Asn-40. Residue Asn-267 is glycosylated (N-linked (GlcNAc...) asparagine). N-linked (GlcNAc...) asparagine glycosylation is found at Asn-377, Asn-435, and Asn-436. The helical transmembrane segment at 517–537 threads the bilayer; that stretch reads IVFLGLCILAGVLMIIAIVVL. Over 538–540 the chain is Cytoplasmic; that stretch reads MLL.

It localises to the membrane. In Mus musculus (Mouse), this protein is CUB domain-containing protein 2 (Cdcp2).